We begin with the raw amino-acid sequence, 640 residues long: MQALEGVNTSPAAAAAAHAPAPRRGIAGLAVAAVGVVYGDIGTSPLYTLKEVFNGPHAVPVTPQNVYGILSLVFWALVLVVSAKYVLFITRADNRGEGGIMALTSLVLRAVPPGRKAWVLSALGVFGAALFYGDGMITPAISVLSAVEGLEVATPAFRPYVLPIALAVLCGLFVIQRHGTGSVGRIFGPVMLVWFVLLAVLGIAGITLHPEIIGALDPRWALRFFADMPLVGWLSLGAVVLAITGGEALYADMGHFGRRPIKFAWFLVVFPSLYLNYLGQGALILDHPDNVRNPFYLLVPDALVYPMVAMATLATIIASQAVISGAYSLTRQAMQLGYAPRMRTIFTSEREMGQIYVPSINWMLLGAVVALVVGFRSSSALASAYGIAVTLTMMIDTLLAFVVVRALWGWGRLQAGLFLGVFLAVDVAFFSATTVKILAGGWFPLLVGALIFTLLTTWKRGRELLNRRLRTDTIPLDTFIRSMFNSPSPRVDGTAVFLTTWLEGVPRALLHNLVHNKVLHHRVVLLTVETADVPHVPDSERVAVEELDYGFYRVRVNYGFKDDPDLPAALVRCADFGLKFAMMETSFFLGRETLVSRVGSGMPRWREKLFIVMFRNAGSAADYFHIPPNRVVELGTQVEL.

A run of 12 helical transmembrane segments spans residues 26–46 (IAGL…TSPL), 69–89 (ILSL…VLFI), 117–137 (AWVL…DGMI), 155–175 (PAFR…LFVI), 186–206 (IFGP…IAGI), 224–244 (FFAD…LAIT), 265–285 (WFLV…ALIL), 297–317 (LLVP…ATII), 355–375 (IYVP…VVGF), 384–404 (AYGI…FVVV), 415–435 (AGLF…ATTV), and 437–457 (ILAG…LLTT).

Belongs to the HAK/KUP transporter (TC 2.A.72) family.

Its subcellular location is the cell inner membrane. It catalyses the reaction K(+)(in) + H(+)(in) = K(+)(out) + H(+)(out). Transport of potassium into the cell. Likely operates as a K(+):H(+) symporter. The sequence is that of Probable potassium transport system protein Kup from Aromatoleum aromaticum (strain DSM 19018 / LMG 30748 / EbN1) (Azoarcus sp. (strain EbN1)).